The primary structure comprises 431 residues: Adenylosuccinate synthetase (431 aa).

Residues 12–18 and 40–42 each bind GTP; these read GDEGKGK and GHT. Aspartate 13 serves as the catalytic Proton acceptor. Mg(2+) is bound by residues aspartate 13 and glycine 40. Residues 13-16, 38-41, threonine 129, arginine 143, glutamine 224, threonine 239, and arginine 303 each bind IMP; these read DEGK and NAGH. Histidine 41 functions as the Proton donor in the catalytic mechanism. 299–305 provides a ligand contact to substrate; it reads VTTGRAR. GTP contacts are provided by residues arginine 305, 331-333, and 413-415; these read KLD and GVG.

It belongs to the adenylosuccinate synthetase family. Homodimer. Mg(2+) is required as a cofactor.

The protein localises to the cytoplasm. The catalysed reaction is IMP + L-aspartate + GTP = N(6)-(1,2-dicarboxyethyl)-AMP + GDP + phosphate + 2 H(+). It functions in the pathway purine metabolism; AMP biosynthesis via de novo pathway; AMP from IMP: step 1/2. Functionally, plays an important role in the de novo pathway of purine nucleotide biosynthesis. Catalyzes the first committed step in the biosynthesis of AMP from IMP. This Mycobacteroides abscessus (strain ATCC 19977 / DSM 44196 / CCUG 20993 / CIP 104536 / JCM 13569 / NCTC 13031 / TMC 1543 / L948) (Mycobacterium abscessus) protein is Adenylosuccinate synthetase.